The chain runs to 155 residues: Protein Smg homolog (155 aa).

The protein belongs to the Smg family.

The polypeptide is Protein Smg homolog (Methylococcus capsulatus (strain ATCC 33009 / NCIMB 11132 / Bath)).